The following is a 404-amino-acid chain: Putative CBL-interacting protein kinase 27 (404 aa).

A Protein kinase domain is found at 11–266 (YEMGRVLGHG…VAGLLETPWF (256 aa)). Residues 17 to 25 (LGHGNFGRV) and K40 contribute to the ATP site. The active-site Proton acceptor is the D134. The interval 152-181 (DFGLSALACHARPDGLLHTACGTPAYVAPE) is activation loop. The region spanning 294–321 (DKDEPPEVLNAFHLISLSEGFDLSPLFE) is the NAF domain. The PPI stretch occupies residues 335 to 356 (AGGTRFATREAASGVVARLEAL).

This sequence belongs to the protein kinase superfamily. CAMK Ser/Thr protein kinase family. SNF1 subfamily. The cofactor is Mn(2+).

The catalysed reaction is L-seryl-[protein] + ATP = O-phospho-L-seryl-[protein] + ADP + H(+). It carries out the reaction L-threonyl-[protein] + ATP = O-phospho-L-threonyl-[protein] + ADP + H(+). Its function is as follows. CIPK serine-threonine protein kinases interact with CBL proteins. Binding of a CBL protein to the regulatory NAF domain of CIPK protein lead to the activation of the kinase in a calcium-dependent manner. The sequence is that of Putative CBL-interacting protein kinase 27 (CIPK27) from Oryza sativa subsp. japonica (Rice).